The sequence spans 303 residues: 34 kDa antigenic protein homolog (303 aa).

The next 4 membrane-spanning stretches (helical) occupy residues 42 to 62, 77 to 97, 102 to 122, and 134 to 154; these read IAVA…MFTL, TGLP…ALVP, HVTV…SATF, and LWVV…ALLV. 2 stretches are compositionally biased toward low complexity: residues 194–207 and 215–255; these read QGAQ…SPGP and GYGS…HQGP. Residues 194–303 are disordered; it reads QGAQQAAGLQ…QSSSPGGAPV (110 aa). Residues 256–271 show a composition bias toward pro residues; the sequence is STPPTGFPSFSPPPPV. The span at 274–286 shows a compositional bias: polar residues; it reads GTGSQAGSAPVNY. Over residues 287-303 the composition is skewed to low complexity; it reads SNPSGGEQSSSPGGAPV.

It to M.paratuberculosis 34 kDa antigenic protein.

Its subcellular location is the cell membrane. This is 34 kDa antigenic protein homolog from Mycobacterium bovis (strain ATCC BAA-935 / AF2122/97).